We begin with the raw amino-acid sequence, 721 residues long: Glucans biosynthesis glucosyltransferase H (721 aa).

The next 6 membrane-spanning stretches (helical) occupy residues 52–72, 97–117, 412–432, 459–479, 505–525, and 570–590; these read CSWR…FAIF, NFCW…VLAS, SPFW…AHFI, FYIT…LLMF, ALVA…ILFG, and LLAW…LSGI.

The protein belongs to the glycosyltransferase 2 family. OpgH subfamily.

Its subcellular location is the cell inner membrane. Its pathway is glycan metabolism; osmoregulated periplasmic glucan (OPG) biosynthesis. Involved in the biosynthesis of osmoregulated periplasmic glucans (OPGs). In Vibrio cholerae serotype O1 (strain ATCC 39541 / Classical Ogawa 395 / O395), this protein is Glucans biosynthesis glucosyltransferase H.